The following is a 381-amino-acid chain: GDP-mannose-dependent monoacylated alpha-(1-6)-phosphatidylinositol monomannoside mannosyltransferase (381 aa).

GDP-alpha-D-mannose-binding residues include Arg-206, Lys-211, Leu-261, and Glu-298.

Belongs to the glycosyltransferase group 1 family. Glycosyltransferase 4 subfamily.

It carries out the reaction a 1,2-diacyl-sn-glycero-3-phospho-[alpha-D-mannopyranosyl-(1&lt;-&gt;6)-D-myo-inositol] + GDP-alpha-D-mannose = a 2,6-O-bis(alpha-D-mannopyranosyl)-1-phosphatidyl-1D-myo-inositol + GDP + H(+). It catalyses the reaction a 1,2-diacyl-sn-glycero-3-phospho-[alpha-D-6-acyl-mannopyranosyl-(1&lt;-&gt;6)-D-myo-inositol] + GDP-alpha-D-mannose = a 2-O-(alpha-D-mannosyl)-6-O-(6-O-acyl-alpha-D-mannosyl)-1-phosphatidyl-1D-myo-inositol + GDP + H(+). It functions in the pathway phospholipid metabolism; phosphatidylinositol metabolism. In terms of biological role, involved in the biosynthesis of phosphatidyl-myo-inositol mannosides (PIM) which are early precursors in the biosynthesis of lipomannans (LM) and lipoarabinomannans (LAM). Catalyzes the addition of a mannosyl residue from GDP-D-mannose (GDP-Man) to the position 6 of a phosphatidyl-myo-inositol bearing an alpha-1,2-linked mannose residue (PIM1) to generate phosphatidyl-myo-inositol bearing alpha-1,2- and alpha-1,6-linked mannose residues (Ac1PIM2). PimB also catalyzes the addition of a mannosyl residue from GDP-Man to the position 6 of phosphatidyl-myo-inositol bearing an acylated alpha-1,2-linked mannose residue (Ac1PIM1) to generate monoacylated phosphatidyl-myo-inositol bearing alpha-1,2- and alpha-1,6-linked mannose residues (Ac1PIM2). The addition of the second mannosyl residue by PimB preferentially occurs before the acylation of the mannosyl residue transferred by PimA. Also able to transfer a mannosyl residue from GDP-Man to the position 6 of a phosphatidyl-myo-inositol (PI), but this reaction is very slow. This chain is GDP-mannose-dependent monoacylated alpha-(1-6)-phosphatidylinositol monomannoside mannosyltransferase, found in Corynebacterium glutamicum (strain ATCC 13032 / DSM 20300 / JCM 1318 / BCRC 11384 / CCUG 27702 / LMG 3730 / NBRC 12168 / NCIMB 10025 / NRRL B-2784 / 534).